The following is a 190-amino-acid chain: Lipid A acyltransferase PagP (190 aa).

A signal peptide spans 1–18 (MKRLISCLTIICALNASA). Catalysis depends on residues histidine 60, aspartate 103, and serine 104.

Belongs to the lipid A palmitoyltransferase family. Homodimer.

It localises to the cell outer membrane. The catalysed reaction is a lipid A + a 1,2-diacyl-sn-glycero-3-phosphocholine = a hepta-acyl lipid A + a 2-acyl-sn-glycero-3-phosphocholine. It carries out the reaction a lipid IVA + a 1,2-diacyl-sn-glycero-3-phosphocholine = a lipid IVB + a 2-acyl-sn-glycero-3-phosphocholine. The enzyme catalyses a lipid IIA + a 1,2-diacyl-sn-glycero-3-phosphocholine = a lipid IIB + a 2-acyl-sn-glycero-3-phosphocholine. Functionally, transfers a fatty acid residue from the sn-1 position of a phospholipid to the N-linked hydroxyfatty acid chain on the proximal unit of lipid A or its precursors. This is Lipid A acyltransferase PagP from Legionella pneumophila subsp. pneumophila (strain Philadelphia 1 / ATCC 33152 / DSM 7513).